The primary structure comprises 282 residues: Protease HtpX homolog (282 aa).

A run of 2 helical transmembrane segments spans residues 7–26 (TTVLLAALTALIIWIGGAVG) and 30–49 (GMMIAFVLALVMNVGSYWFS). Histidine 131 provides a ligand contact to Zn(2+). Residue glutamate 132 is part of the active site. Histidine 135 is a binding site for Zn(2+). The next 2 membrane-spanning stretches (helical) occupy residues 141–161 (ILVSSIAATLAGVVMILARMA) and 183–203 (LGLVVTAILAPIAAMLIQLAI). Zn(2+) is bound at residue glutamate 208.

It belongs to the peptidase M48B family. Zn(2+) is required as a cofactor.

Its subcellular location is the cell inner membrane. The chain is Protease HtpX homolog from Syntrophobacter fumaroxidans (strain DSM 10017 / MPOB).